We begin with the raw amino-acid sequence, 346 residues long: Biotin synthase (346 aa).

A Radical SAM core domain is found at 38-256; that stretch reads QQVQVSTLLS…IAVARIMMPT (219 aa). Positions 53, 57, and 60 each coordinate [4Fe-4S] cluster. Positions 97, 128, 188, and 260 each coordinate [2Fe-2S] cluster.

This sequence belongs to the radical SAM superfamily. Biotin synthase family. In terms of assembly, homodimer. [4Fe-4S] cluster serves as cofactor. It depends on [2Fe-2S] cluster as a cofactor.

The catalysed reaction is (4R,5S)-dethiobiotin + (sulfur carrier)-SH + 2 reduced [2Fe-2S]-[ferredoxin] + 2 S-adenosyl-L-methionine = (sulfur carrier)-H + biotin + 2 5'-deoxyadenosine + 2 L-methionine + 2 oxidized [2Fe-2S]-[ferredoxin]. The protein operates within cofactor biosynthesis; biotin biosynthesis; biotin from 7,8-diaminononanoate: step 2/2. Its function is as follows. Catalyzes the conversion of dethiobiotin (DTB) to biotin by the insertion of a sulfur atom into dethiobiotin via a radical-based mechanism. The protein is Biotin synthase of Salmonella agona (strain SL483).